Consider the following 116-residue polypeptide: Large ribosomal subunit protein uL24 (116 aa).

Residues 1 to 21 (MATNNGAGKARHKFHVKKGDT) are disordered.

This sequence belongs to the universal ribosomal protein uL24 family. In terms of assembly, part of the 50S ribosomal subunit.

Functionally, one of two assembly initiator proteins, it binds directly to the 5'-end of the 23S rRNA, where it nucleates assembly of the 50S subunit. Its function is as follows. One of the proteins that surrounds the polypeptide exit tunnel on the outside of the subunit. The polypeptide is Large ribosomal subunit protein uL24 (Gloeobacter violaceus (strain ATCC 29082 / PCC 7421)).